Reading from the N-terminus, the 290-residue chain is 4-hydroxy-tetrahydrodipicolinate synthase (290 aa).

Position 46 (Thr-46) interacts with pyruvate. The active-site Proton donor/acceptor is Tyr-134. Lys-163 (schiff-base intermediate with substrate) is an active-site residue. Val-205 is a pyruvate binding site.

This sequence belongs to the DapA family. As to quaternary structure, homotetramer; dimer of dimers.

The protein resides in the cytoplasm. It catalyses the reaction L-aspartate 4-semialdehyde + pyruvate = (2S,4S)-4-hydroxy-2,3,4,5-tetrahydrodipicolinate + H2O + H(+). The protein operates within amino-acid biosynthesis; L-lysine biosynthesis via DAP pathway; (S)-tetrahydrodipicolinate from L-aspartate: step 3/4. Its function is as follows. Catalyzes the condensation of (S)-aspartate-beta-semialdehyde [(S)-ASA] and pyruvate to 4-hydroxy-tetrahydrodipicolinate (HTPA). The chain is 4-hydroxy-tetrahydrodipicolinate synthase from Bacillus subtilis (strain 168).